Here is an 818-residue protein sequence, read N- to C-terminus: Phenylalanine--tRNA ligase beta subunit (818 aa).

In terms of domain architecture, tRNA-binding spans 39 to 148 (AAELQKFEVA…EDAVVGENFT (110 aa)). In terms of domain architecture, B5 spans 423–498 (PQKKPLDFSA…RIYGYDKIES (76 aa)). Residues aspartate 476, aspartate 482, glutamate 485, and glutamate 486 each coordinate Mg(2+). Residues 724–817 (SDFQANFRDY…IEQKFQGTLR (94 aa)) form the FDX-ACB domain.

Belongs to the phenylalanyl-tRNA synthetase beta subunit family. Type 1 subfamily. In terms of assembly, tetramer of two alpha and two beta subunits. The cofactor is Mg(2+).

Its subcellular location is the cytoplasm. It carries out the reaction tRNA(Phe) + L-phenylalanine + ATP = L-phenylalanyl-tRNA(Phe) + AMP + diphosphate + H(+). The protein is Phenylalanine--tRNA ligase beta subunit of Rickettsia felis (strain ATCC VR-1525 / URRWXCal2) (Rickettsia azadi).